The chain runs to 200 residues: uncharacterized protein (200 aa).

Disordered stretches follow at residues 1–27 (MTDT…EAET), 42–79 (IPKE…STNA), and 169–200 (HGRA…EHGR). Residues 187 to 200 (RQMEKTGAGREHGR) show a composition bias toward basic and acidic residues.

This is an uncharacterized protein from Shigella flexneri.